Here is a 238-residue protein sequence, read N- to C-terminus: Pyridoxine 5'-phosphate synthase (238 aa).

Residue N7 coordinates 3-amino-2-oxopropyl phosphate. 9–10 (DH) serves as a coordination point for 1-deoxy-D-xylulose 5-phosphate. R18 contacts 3-amino-2-oxopropyl phosphate. H43 (proton acceptor) is an active-site residue. 1-deoxy-D-xylulose 5-phosphate-binding residues include R45 and H50. The active-site Proton acceptor is the E70. T100 serves as a coordination point for 1-deoxy-D-xylulose 5-phosphate. The Proton donor role is filled by H190. Residues G191 and 212 to 213 (GH) contribute to the 3-amino-2-oxopropyl phosphate site.

It belongs to the PNP synthase family. In terms of assembly, homooctamer; tetramer of dimers.

It is found in the cytoplasm. It carries out the reaction 3-amino-2-oxopropyl phosphate + 1-deoxy-D-xylulose 5-phosphate = pyridoxine 5'-phosphate + phosphate + 2 H2O + H(+). Its pathway is cofactor biosynthesis; pyridoxine 5'-phosphate biosynthesis; pyridoxine 5'-phosphate from D-erythrose 4-phosphate: step 5/5. Catalyzes the complicated ring closure reaction between the two acyclic compounds 1-deoxy-D-xylulose-5-phosphate (DXP) and 3-amino-2-oxopropyl phosphate (1-amino-acetone-3-phosphate or AAP) to form pyridoxine 5'-phosphate (PNP) and inorganic phosphate. The protein is Pyridoxine 5'-phosphate synthase of Prochlorococcus marinus (strain AS9601).